Reading from the N-terminus, the 172-residue chain is Translation initiation factor IF-3 (172 aa).

This sequence belongs to the IF-3 family. In terms of assembly, monomer.

The protein resides in the cytoplasm. IF-3 binds to the 30S ribosomal subunit and shifts the equilibrium between 70S ribosomes and their 50S and 30S subunits in favor of the free subunits, thus enhancing the availability of 30S subunits on which protein synthesis initiation begins. The chain is Translation initiation factor IF-3 from Oceanobacillus iheyensis (strain DSM 14371 / CIP 107618 / JCM 11309 / KCTC 3954 / HTE831).